A 717-amino-acid chain; its full sequence is UV-stimulated scaffold protein A (717 aa).

The VHS-like stretch occupies residues 2 to 145; that stretch reads DQKLSQLIEE…HFLKHTKKVD (144 aa). Positions 169–199 form a coiled coil; that stretch reads KIHRESADRAKREMEEMYDEIECCLTEVENC. 4 disordered regions span residues 231–253, 277–301, 389–418, and 479–503; these read PLSP…EEQP, QTAM…RSHG, PGRG…EKEG, and CLSS…QAER. Phosphoserine is present on residues Ser284, Ser291, and Ser403. 2 stretches are compositionally biased toward acidic residues: residues 285-294 and 400-412; these read RDEDEPSDPD and LEDS…DFVE. A Glycyl lysine isopeptide (Lys-Gly) (interchain with G-Cter in ubiquitin) cross-link involves residue Lys416. Residues 479 to 489 are compositionally biased toward polar residues; the sequence is CLSSPSPSSTR. A UVSSA-type zinc finger spans residues 571–598; the sequence is QHKCRALRPNGRLCERQDRLKCPFHGKI. Residues Cys574, Cys584, Cys592, and His595 each coordinate Zn(2+). The interval 595-672 is disordered; it reads HGKIIPRDDK…HPNLTDLRER (78 aa). Over residues 599-618 the composition is skewed to basic and acidic residues; the sequence is IPRDDKGQPLNPEDRAREQR. Over residues 652–664 the composition is skewed to basic residues; sequence SSKKGKGKKKKHP.

The protein belongs to the UVSSA family. Interacts with the elongating form of RNA polymerase II (RNA pol IIo) during transcription stress. Interacts with the TFIIH complex during transcription stress. Interacts with ERCC6. Interacts with ERCC8. Interacts with USP7. Monoubiquitinated at Lys-416 in response to transcription stress; this promotes efficient transfer of TFIIH to stalled RNA polymerase II.

The protein resides in the chromosome. Factor involved in transcription-coupled nucleotide excision repair (TC-NER), a mechanism that rapidly removes RNA polymerase II-blocking lesions from the transcribed strand of active genes. Acts as a key adapter that promotes recruitment of factors involved in TC-NER. Facilitates the ubiquitination of the elongating form of RNA polymerase II (RNA pol IIo) at DNA damage sites, thereby promoting RNA pol IIo backtracking and access by the TC-NER machinery to lesion sites. Also promotes stabilization of ERCC6/CSB by recruiting deubiquitinating enzyme USP7 to TC-NER complexes, preventing UV-induced degradation of ERCC6 by the proteasome. Mediates the recruitment of the TFIIH complex and other factors that are required for nucleotide excision repair to RNA polymerase II. Also required to inactivate stalled RNA polymerase II by blocking the access of TCEA1/TFIIS, thereby preventing reactivation of RNA polymerase II. Not involved in processing oxidative damage. The chain is UV-stimulated scaffold protein A (Uvssa) from Mus musculus (Mouse).